A 212-amino-acid chain; its full sequence is Ribosomal RNA small subunit methyltransferase G (212 aa).

S-adenosyl-L-methionine contacts are provided by residues Gly-75, Leu-80, 126–127 (AQ), and Arg-141.

This sequence belongs to the methyltransferase superfamily. RNA methyltransferase RsmG family.

It is found in the cytoplasm. In terms of biological role, specifically methylates the N7 position of guanine in position 518 of 16S rRNA. The sequence is that of Ribosomal RNA small subunit methyltransferase G from Beutenbergia cavernae (strain ATCC BAA-8 / DSM 12333 / CCUG 43141 / JCM 11478 / NBRC 16432 / NCIMB 13614 / HKI 0122).